We begin with the raw amino-acid sequence, 92 residues long: Large ribosomal subunit protein eL43z (92 aa).

The C4-type zinc-finger motif lies at cysteine 39–cysteine 60.

Belongs to the eukaryotic ribosomal protein eL43 family.

This is Large ribosomal subunit protein eL43z from Oryza sativa subsp. japonica (Rice).